A 398-amino-acid polypeptide reads, in one-letter code: L-glutamine--4-(methylsulfanyl)-2-oxobutanoate aminotransferase (398 aa).

At Lys-240 the chain carries N6-(pyridoxal phosphate)lysine.

The protein belongs to the class-I pyridoxal-phosphate-dependent aminotransferase family. MtnE subfamily. Pyridoxal 5'-phosphate is required as a cofactor.

It carries out the reaction 4-methylsulfanyl-2-oxobutanoate + L-glutamine = 2-oxoglutaramate + L-methionine. Its pathway is amino-acid biosynthesis; L-methionine biosynthesis via salvage pathway; L-methionine from S-methyl-5-thio-alpha-D-ribose 1-phosphate: step 6/6. Functionally, involved in the methylthioribose (MTR) recycling pathway. Catalyzes the formation of methionine from 2-keto-4-methylthiobutyrate (KMTB). This Bacillus subtilis (strain 168) protein is L-glutamine--4-(methylsulfanyl)-2-oxobutanoate aminotransferase.